We begin with the raw amino-acid sequence, 323 residues long: Quinolinate synthase (323 aa).

His38 and Ser55 together coordinate iminosuccinate. Residue Cys100 coordinates [4Fe-4S] cluster. Iminosuccinate-binding positions include 126-128 and Ser143; that span reads YIN. Cys186 lines the [4Fe-4S] cluster pocket. Residues 212 to 214 and Thr229 contribute to the iminosuccinate site; that span reads HPE. Cys279 is a [4Fe-4S] cluster binding site.

It belongs to the quinolinate synthase family. Type 2 subfamily. It depends on [4Fe-4S] cluster as a cofactor.

It is found in the cytoplasm. The enzyme catalyses iminosuccinate + dihydroxyacetone phosphate = quinolinate + phosphate + 2 H2O + H(+). Its pathway is cofactor biosynthesis; NAD(+) biosynthesis; quinolinate from iminoaspartate: step 1/1. Functionally, catalyzes the condensation of iminoaspartate with dihydroxyacetone phosphate to form quinolinate. In Gloeothece citriformis (strain PCC 7424) (Cyanothece sp. (strain PCC 7424)), this protein is Quinolinate synthase.